We begin with the raw amino-acid sequence, 399 residues long: Forkhead box protein I3 (399 aa).

Disordered regions lie at residues 87-109 (AGAQ…GSAA), 221-287 (KRRR…ASTL), and 307-353 (SSSS…STVG). The segment covering 96 to 109 (PSASAPASPAGSAA) has biased composition (low complexity). Phosphoserine occurs at positions 99 and 103. The fork-head DNA-binding region spans 129–223 (RPPYSYSALI…DNGNFRRKRR (95 aa)). The short motif at 219–225 (RRKRRRR) is the Nuclear localization signal element. 2 stretches are compositionally biased toward polar residues: residues 228–248 (ASSN…SSRL) and 258–267 (SPSSILRPSQ). A phosphoserine mark is found at serine 258, serine 266, and serine 268. 3 stretches are compositionally biased toward polar residues: residues 275 to 287 (TKST…ASTL), 307 to 317 (SSSSMGNQRTL), and 328 to 353 (QLPS…STVG). Positions 385-393 (SMVNSLIYP) match the 9aaTAD motif.

Phosphorylation promotes the transcription factor activity. Dephosphorylation by protein phosphatase 2A (PP2A) reduces its activity. In terms of tissue distribution, specifically expressed in the epithelium in developing ectodermal appendages. Expressed in pharyngeal endoderm and ectoderm. Expressed in pre-placodal ectoderm. Down-regulated as the otic placode is induced. Expressed in teeth and hair follicles throughout embryogenesis. Expressed in mammary glands only during the earliest stages of development.

The protein localises to the nucleus. Functionally, transcription factor required for pharyngeal arch development, which is involved in hair, ear, jaw and dental development. May act as a pioneer transcription factor during pharyngeal arch development. Required for epithelial cell differentiation within the epidermis. Acts at multiple stages of otic placode induction: necessary for preplacodal ectoderm to execute an inner ear program. Required for hair follicle stem cell specification. Acts downstream of TBX1 for the formation of the thymus and parathyroid glands from the third pharyngeal pouch. This is Forkhead box protein I3 from Mus musculus (Mouse).